The following is a 562-amino-acid chain: NAD-dependent malic enzyme (562 aa).

Tyr101 functions as the Proton donor in the catalytic mechanism. Position 154 (Arg154) interacts with NAD(+). The active-site Proton acceptor is Lys172. A divalent metal cation-binding residues include Glu243, Asp244, and Asp267. The NAD(+) site is built by Asp267 and Asn415.

Belongs to the malic enzymes family. Homotetramer. Requires Mg(2+) as cofactor. Mn(2+) is required as a cofactor.

The catalysed reaction is (S)-malate + NAD(+) = pyruvate + CO2 + NADH. It catalyses the reaction oxaloacetate + H(+) = pyruvate + CO2. The chain is NAD-dependent malic enzyme from Shewanella denitrificans (strain OS217 / ATCC BAA-1090 / DSM 15013).